We begin with the raw amino-acid sequence, 197 residues long: Putative carbonic anhydrase YvdA (197 aa).

Zn(2+)-binding residues include Cys41, Asp43, His99, and Cys102.

It belongs to the beta-class carbonic anhydrase family. It depends on Zn(2+) as a cofactor.

It carries out the reaction hydrogencarbonate + H(+) = CO2 + H2O. In terms of biological role, reversible hydration of carbon dioxide. In Bacillus subtilis (strain 168), this protein is Putative carbonic anhydrase YvdA (yvdA).